The following is a 211-amino-acid chain: MRNIQIALTKGRLEKHVIPLFEQIGIDCSELKNKGRKLVFQSKNTNVSFILVKAIDVATYVEHGVADIGIVGKDILMENEKDIYEMLDLGVGICKFCVASIPTYNPKSYRKKRIATKYPHITSTYYHEKGEDVEIIKIEGSVEIAPLLGLADAIVDIVETGKTLQENGLIVFEEMYFISARMIVNKAALKTKKDEIFSIINMMEQEILSGK.

Belongs to the ATP phosphoribosyltransferase family. Short subfamily. As to quaternary structure, heteromultimer composed of HisG and HisZ subunits.

The protein resides in the cytoplasm. The catalysed reaction is 1-(5-phospho-beta-D-ribosyl)-ATP + diphosphate = 5-phospho-alpha-D-ribose 1-diphosphate + ATP. It participates in amino-acid biosynthesis; L-histidine biosynthesis; L-histidine from 5-phospho-alpha-D-ribose 1-diphosphate: step 1/9. In terms of biological role, catalyzes the condensation of ATP and 5-phosphoribose 1-diphosphate to form N'-(5'-phosphoribosyl)-ATP (PR-ATP). Has a crucial role in the pathway because the rate of histidine biosynthesis seems to be controlled primarily by regulation of HisG enzymatic activity. This chain is ATP phosphoribosyltransferase, found in Bacillus cereus (strain B4264).